Reading from the N-terminus, the 33-residue chain is Brevinin-2Eb (33 aa).

Cysteines 27 and 33 form a disulfide.

Belongs to the frog skin active peptide (FSAP) family. Brevinin subfamily. Expressed by the skin glands.

It is found in the secreted. In terms of biological role, shows antibacterial activity against representative Gram-negative and Gram-positive bacterial species, and hemolytic activity. This Pelophylax lessonae (Pool frog) protein is Brevinin-2Eb.